A 293-amino-acid chain; its full sequence is MIPPSYIGRFAPSPSGSLHFGSLVAALGSYLRAHSQQGQWLVRIEDIDPPREVPGASDNILRTLDAYGLHWHGTVLFQQQRYQVYQDQIEAFIASDLAYYCQCTRKIIQTSGGVYDGRCGRLQPRLTHGAIRIRNHVKVDHFVDKLQGPVVVDKAFAEEDFIIKRSDGLYAYQLAVVLDDAYQGITEVVRGCDLLEASCRQISLFTQLEFTPPDWLHLPLVCAEKGFKLSKQNYAPAIDVIHPQASINAALTFLGQKAVDVDSVEVMLKQAVEQFDLSTIPAQKEIVLSTIND.

L-glutamate-binding positions include 9–13 (RFAPS) and Glu-45. Positions 12-22 (PSPSGSLHFGS) match the 'HIGH' region motif. The Zn(2+) site is built by Cys-101, Cys-103, Tyr-115, and Cys-119. 2 residues coordinate L-glutamate: Tyr-172 and Arg-190. Residues 228–232 (KLSKQ) carry the 'KMSKS' region motif. Position 231 (Lys-231) interacts with ATP.

It belongs to the class-I aminoacyl-tRNA synthetase family. GluQ subfamily. Zn(2+) serves as cofactor.

Its function is as follows. Catalyzes the tRNA-independent activation of glutamate in presence of ATP and the subsequent transfer of glutamate onto a tRNA(Asp). Glutamate is transferred on the 2-amino-5-(4,5-dihydroxy-2-cyclopenten-1-yl) moiety of the queuosine in the wobble position of the QUC anticodon. This is Glutamyl-Q tRNA(Asp) synthetase from Shewanella frigidimarina (strain NCIMB 400).